Consider the following 78-residue polypeptide: RNA-binding protein Hfq (78 aa).

The region spanning 9-69 (DHFLNQLRKE…ISTFAPQRNV (61 aa)) is the Sm domain.

The protein belongs to the Hfq family. As to quaternary structure, homohexamer.

Functionally, RNA chaperone that binds small regulatory RNA (sRNAs) and mRNAs to facilitate mRNA translational regulation in response to envelope stress, environmental stress and changes in metabolite concentrations. Also binds with high specificity to tRNAs. The polypeptide is RNA-binding protein Hfq (Halalkalibacterium halodurans (strain ATCC BAA-125 / DSM 18197 / FERM 7344 / JCM 9153 / C-125) (Bacillus halodurans)).